A 38-amino-acid chain; its full sequence is Photosystem II reaction center protein L (38 aa).

The helical transmembrane segment at 17–37 (SLFWGLLLIFVLAVLFSNYFF) threads the bilayer.

This sequence belongs to the PsbL family. In terms of assembly, PSII is composed of 1 copy each of membrane proteins PsbA, PsbB, PsbC, PsbD, PsbE, PsbF, PsbH, PsbI, PsbJ, PsbK, PsbL, PsbM, PsbT, PsbX, PsbY, PsbZ, Psb30/Ycf12, at least 3 peripheral proteins of the oxygen-evolving complex and a large number of cofactors. It forms dimeric complexes.

It localises to the plastid. The protein resides in the chloroplast thylakoid membrane. One of the components of the core complex of photosystem II (PSII). PSII is a light-driven water:plastoquinone oxidoreductase that uses light energy to abstract electrons from H(2)O, generating O(2) and a proton gradient subsequently used for ATP formation. It consists of a core antenna complex that captures photons, and an electron transfer chain that converts photonic excitation into a charge separation. This subunit is found at the monomer-monomer interface and is required for correct PSII assembly and/or dimerization. The chain is Photosystem II reaction center protein L from Chaetosphaeridium globosum (Charophycean green alga).